Reading from the N-terminus, the 630-residue chain is Probable potassium transport system protein Kup 1 (630 aa).

The next 12 membrane-spanning stretches (helical) occupy residues L15–L35, L58–L78, T104–I124, P142–V162, F173–I193, A208–L228, W252–L272, A290–I310, I342–F362, L368–F388, A399–A419, and I424–T444.

It belongs to the HAK/KUP transporter (TC 2.A.72) family.

The protein resides in the cell inner membrane. It catalyses the reaction K(+)(in) + H(+)(in) = K(+)(out) + H(+)(out). Transport of potassium into the cell. Likely operates as a K(+):H(+) symporter. The chain is Probable potassium transport system protein Kup 1 from Sinorhizobium medicae (strain WSM419) (Ensifer medicae).